The primary structure comprises 80 residues: Large ribosomal subunit protein uL24 (80 aa).

The protein belongs to the universal ribosomal protein uL24 family. In terms of assembly, part of the 50S ribosomal subunit.

Its function is as follows. One of two assembly initiator proteins, it binds directly to the 5'-end of the 23S rRNA, where it nucleates assembly of the 50S subunit. In terms of biological role, one of the proteins that surrounds the polypeptide exit tunnel on the outside of the subunit. This chain is Large ribosomal subunit protein uL24, found in Prosthecochloris aestuarii (strain DSM 271 / SK 413).